The sequence spans 612 residues: Kelch repeat and BTB domain-containing protein 3 (612 aa).

A BTB domain is found at 52-119 (YDFKIIMKDE…AYTGKTKITD (68 aa)). The 101-residue stretch at 150–250 (NLVNCLQLLS…VRLHQLSEET (101 aa)) folds into the BACK domain. Kelch repeat units follow at residues 291–337 (STTE…GSSL), 339–390 (SYGE…STMK), 400–450 (MALD…PEAS), 452–502 (CQNV…ATLI), and 548–595 (GIED…FYCQ).

The protein is Kelch repeat and BTB domain-containing protein 3 of Pongo abelii (Sumatran orangutan).